A 285-amino-acid chain; its full sequence is NADPH-dependent 7-cyano-7-deazaguanine reductase (285 aa).

91 to 93 lines the substrate pocket; sequence IES. 93–94 provides a ligand contact to NADPH; sequence SK. Cys192 serves as the catalytic Thioimide intermediate. Asp199 acts as the Proton donor in catalysis. 231–232 lines the substrate pocket; that stretch reads HE. 260–261 provides a ligand contact to NADPH; that stretch reads RG.

Belongs to the GTP cyclohydrolase I family. QueF type 2 subfamily. Homodimer.

The protein localises to the cytoplasm. The catalysed reaction is 7-aminomethyl-7-carbaguanine + 2 NADP(+) = 7-cyano-7-deazaguanine + 2 NADPH + 3 H(+). It functions in the pathway tRNA modification; tRNA-queuosine biosynthesis. Its function is as follows. Catalyzes the NADPH-dependent reduction of 7-cyano-7-deazaguanine (preQ0) to 7-aminomethyl-7-deazaguanine (preQ1). This chain is NADPH-dependent 7-cyano-7-deazaguanine reductase, found in Psychromonas ingrahamii (strain DSM 17664 / CCUG 51855 / 37).